Here is a 391-residue protein sequence, read N- to C-terminus: Elongation factor Tu (391 aa).

A tr-type G domain is found at 10 to 201; sequence KPHVNIGTIG…AVDSYIPTPE (192 aa). The tract at residues 19 to 26 is G1; sequence GHVDHGKT. Position 19–26 (19–26) interacts with GTP; the sequence is GHVDHGKT. Thr26 serves as a coordination point for Mg(2+). The segment at 55–59 is G2; sequence GITIS. Residues 76 to 79 form a G3 region; that stretch reads DCPG. Residues 76–80 and 131–134 contribute to the GTP site; these read DCPGH and NKCD. The segment at 131-134 is G4; the sequence is NKCD. Positions 169-171 are G5; sequence SAL.

Belongs to the TRAFAC class translation factor GTPase superfamily. Classic translation factor GTPase family. EF-Tu/EF-1A subfamily. Monomer.

It is found in the cytoplasm. It catalyses the reaction GTP + H2O = GDP + phosphate + H(+). Functionally, GTP hydrolase that promotes the GTP-dependent binding of aminoacyl-tRNA to the A-site of ribosomes during protein biosynthesis. This chain is Elongation factor Tu, found in Brucella canis (strain ATCC 23365 / NCTC 10854 / RM-666).